Reading from the N-terminus, the 876-residue chain is GRB2-associated and regulator of MAPK protein (876 aa).

Residues 12 to 320 are CABIT; it reads KDVKWSPVAM…HQVKGDMWPE (309 aa). At Tyr105 the chain carries Phosphotyrosine. Positions 427 to 448 are disordered; sequence GDSGSDYLFPEANEESAGIPGK. Residue Tyr453 is modified to Phosphotyrosine. Disordered stretches follow at residues 460 to 501 and 530 to 572; these read EGKP…ATLG and LNAP…SYYS. Residues 498 to 550 form a necessary for interaction with GRB2 region; it reads ATLGATIKSSEIALPPPPVPPKSEAVREECRLLNAPPVPPRSAKPLSTSPSIP. Positions 560–572 are enriched in polar residues; it reads QTRSPSPTLSYYS. Residues Ser609 and Ser613 each carry the phosphoserine modification. Composition is skewed to polar residues over residues 630–639 and 647–657; these read SGASENQTRS and RSYSYPRQKTP. Disordered regions lie at residues 630–664 and 722–759; these read SGASENQTRSDFLLDPSRSYSYPRQKTPGTPKRTC and CPALPPRAPKPVEQKATPETSPLPLKIDGAEEDPTAGS. The SAM domain occupies 811-876; it reads LSIEEVSKSL…QFINGWRPKI (66 aa).

The protein belongs to the GAREM family. In terms of assembly, interacts with EGFR. Interacts (via proline-rich domain and phosphorylated at Tyr-105 and Tyr-453) with GRB2 (via SH3 domains); the interaction occurs upon EGF stimulation. Interacts (phosphorylated at Tyr-453) with PTPN11; the interaction increases MAPK/ERK activity and does not affect the GRB2/SOS complex formation. On EGF stimulation, phosphorylated on Tyr-105 and Tyr-453.

In terms of biological role, acts as an adapter protein that plays a role in intracellular signaling cascades triggered either by the cell surface activated epidermal growth factor receptor and/or cytoplasmic protein tyrosine kinases. Promotes activation of the MAPK/ERK signaling pathway. Plays a role in the regulation of cell proliferation. This Mus musculus (Mouse) protein is GRB2-associated and regulator of MAPK protein (Garem1).